The following is a 563-amino-acid chain: MEKSTMSAILLVLHLFVLLLQYSEVHSLATTSNHDFSYLRFAYDATDLELEGSYDYVIVGGGTSGCPLAATLSEKYKVLVLERGSLPTAYPNVLTADGFVYNLQQEDDGKTPVERFVSEDGIDNVRGRVLGGTSMINAGVYARANTSIYSASGVDWDMDLVNKTYEWVEDTIVFKPNYQPWQSVTGTAFLEAGVDPNHGFSLDHEAGTRITGSTFDNKGTRHAADELLNKGNSNNLRVGVHASVEKIIFSNAPGLTATGVIYRDSNGTPHRAFVRSKGEVIVSAGTIGTPQLLLLSGVGPESYLSSLNIPVVLSHPYVGQFLHDNPRNFINILPPNPIEPTIVTVLGISNDFYQCSFSSLPFTTPPFSFFPSTSYPLPNSTFAHFASKVAGPLSYGSLTLKSSSNVRVSPNVKFNYYSNPTDLSHCVSGMKKIGELLSTDALKPYKVEDLPGIEGFNILGIPLPKDQTDDAAFETFCRESVASYWHYHGGCLVGKVLDGDFRVTGIDALRVVDGSTFPYTPASHPQGFYLMLGRYVGIKILQERSASDLKILDSLKSAASLVL.

Residues Met-1–Ser-27 form the signal peptide. Residues Thr-63 to Ser-64, Glu-82 to Arg-83, Val-129, Thr-133, and Asn-137 to Val-140 each bind FAD. 2 N-linked (GlcNAc...) asparagine glycosylation sites follow: Asn-145 and Asn-162. FAD is bound at residue Val-244. Cys-355 contributes to the substrate binding site. Asn-379 is a glycosylation site (N-linked (GlcNAc...) asparagine). Cys-426 and Cys-477 are joined by a disulfide. Tyr-484 is a substrate binding site. FAD contacts are provided by residues Trp-485 to His-486 and Gly-514. The active-site Proton donor is the His-486. His-524 acts as the Proton acceptor in catalysis. Pro-525–Gln-526 provides a ligand contact to FAD.

The protein belongs to the GMC oxidoreductase family. Monomer. FAD serves as cofactor. In terms of processing, glycosylated. As to expression, seeds. Localized within cotyledonary parenchyma cells.

It localises to the vacuole. Its subcellular location is the aleurone grain. The catalysed reaction is (R)-mandelonitrile = benzaldehyde + hydrogen cyanide. Functionally, involved in cyanogenesis, the release of HCN from injured tissues. Catalyzes the stereospecific addition of HCN to a variety of aldehydes in vitro. It is a major seed constituent, and could have the additional role of a storage form for reduced nitrogen. The chain is (R)-mandelonitrile lyase 1 (MDL1) from Prunus serotina (Black cherry).